Consider the following 257-residue polypeptide: Neuroendocrine secretory protein 55 (257 aa).

A signal peptide spans 1–46 (MDRRSRAQQWRRARHNYNDLCPPIGRRAATALLWLSCSIALLRALA). The interval 61–257 (SFLNAHHRSA…RKGPIPIRRH (197 aa)) is disordered. Positions 70-82 (AAAAAAAQVLPES) are enriched in low complexity. Residues 86 to 103 (ESDHEHEEVEPELARPEC) show a composition bias toward basic and acidic residues. The segment covering 104 to 139 (LEYDQDDYETETDSETEPESDIESETEIETEPETEP) has biased composition (acidic residues). Basic and acidic residues predominate over residues 200-211 (EPQRGPLDQDPR). The span at 227 to 237 (PRRCKTRRPAR) shows a compositional bias: basic residues.

Belongs to the NESP55 family. Binds keratan sulfate chains. Post-translationally, may be proteolytically processed to give rise to a number of active peptides.

The protein resides in the cytoplasmic vesicle. It localises to the secretory vesicle. The protein localises to the secreted. This chain is Neuroendocrine secretory protein 55, found in Mus musculus (Mouse).